The chain runs to 340 residues: MIFIDACFKKPTPYTPIWMMRQAGRYLPEYMEVRKQAGDFLSLCKDYKKASEVSLQPIDILDVDAAIIFSDILVVPLEMGMNLRFEKGEGPIFDNPISTLEDLEKLDDQNAHKKLNYVYDALKLTREKLSQNKALIGFCGSPWTIATYMIEGSGSKNYAKCKKMLYQNPELLHKILNKLTQVLKLYLEEQIKAGANAIQIFDSWASALEYDKFFEFSFNYMLEISNFIKSKYPNIPVILFPKGISGYLDRIDGNFDVFGVDWSTPLDLARDKLSHKYTLQGNMEPCRLYDKNAIKEGVEKILKTMQNKAHIFNLGHGILPDIPVENAKYFIKLVQESSAK.

Substrate-binding positions include 21–25, Asp71, Tyr148, Ser203, and His316; that span reads RQAGR.

This sequence belongs to the uroporphyrinogen decarboxylase family. Homodimer.

The protein localises to the cytoplasm. It carries out the reaction uroporphyrinogen III + 4 H(+) = coproporphyrinogen III + 4 CO2. The protein operates within porphyrin-containing compound metabolism; protoporphyrin-IX biosynthesis; coproporphyrinogen-III from 5-aminolevulinate: step 4/4. Catalyzes the decarboxylation of four acetate groups of uroporphyrinogen-III to yield coproporphyrinogen-III. In Campylobacter jejuni subsp. jejuni serotype O:23/36 (strain 81-176), this protein is Uroporphyrinogen decarboxylase.